The following is a 196-amino-acid chain: Nucleoid occlusion factor SlmA (196 aa).

One can recognise an HTH tetR-type domain in the interval 6 to 66; that stretch reads RNRREEILQA…GLIEFVEDTL (61 aa). The segment at residues 29 to 48 is a DNA-binding region (H-T-H motif); it reads TTAKLAANLGVSEAALYRHF. Residues 108-135 adopt a coiled-coil conformation; that stretch reads DALMGEHDRLRGRMEDLFNRIESSIKQI.

This sequence belongs to the nucleoid occlusion factor SlmA family. Homodimer. Interacts with FtsZ.

The protein resides in the cytoplasm. It localises to the nucleoid. In terms of biological role, required for nucleoid occlusion (NO) phenomenon, which prevents Z-ring formation and cell division over the nucleoid. Acts as a DNA-associated cell division inhibitor that binds simultaneously chromosomal DNA and FtsZ, and disrupts the assembly of FtsZ polymers. SlmA-DNA-binding sequences (SBS) are dispersed on non-Ter regions of the chromosome, preventing FtsZ polymerization at these regions. This chain is Nucleoid occlusion factor SlmA, found in Idiomarina loihiensis (strain ATCC BAA-735 / DSM 15497 / L2-TR).